The following is a 233-amino-acid chain: Lipoprotein-releasing system ATP-binding protein LolD (233 aa).

The ABC transporter domain occupies 6–233 (LQCDNLCKRY…TAELSLMGAE (228 aa)). 42 to 49 (GSSGSGKS) provides a ligand contact to ATP.

This sequence belongs to the ABC transporter superfamily. Lipoprotein translocase (TC 3.A.1.125) family. In terms of assembly, the complex is composed of two ATP-binding proteins (LolD) and two transmembrane proteins (LolC and LolE).

The protein localises to the cell inner membrane. Functionally, part of the ABC transporter complex LolCDE involved in the translocation of mature outer membrane-directed lipoproteins, from the inner membrane to the periplasmic chaperone, LolA. Responsible for the formation of the LolA-lipoprotein complex in an ATP-dependent manner. This Salmonella choleraesuis (strain SC-B67) protein is Lipoprotein-releasing system ATP-binding protein LolD.